Here is a 234-residue protein sequence, read N- to C-terminus: Structural PPIase-like protein L605 (234 aa).

One can recognise a PPIase cyclophilin-type domain in the interval 18–205 (YMDIVLNNEI…PTFSIGKCGA (188 aa)).

Belongs to the cyclophilin-type PPIase family. In terms of assembly, homotrimer.

Its subcellular location is the virion. The protein resides in the host cytoplasm. This is Structural PPIase-like protein L605 from Acanthamoeba polyphaga mimivirus (APMV).